The primary structure comprises 229 residues: Ribonuclease 3 (229 aa).

The RNase III domain occupies 7–132 (ISAFCDRIGH…VIAAVYRDAG (126 aa)). Glu-45 provides a ligand contact to Mg(2+). The active site involves Asp-49. Mg(2+) contacts are provided by Asp-118 and Glu-121. Glu-121 is an active-site residue. The region spanning 157–226 (DPKTALQEWA…AKALLAQVES (70 aa)) is the DRBM domain.

Belongs to the ribonuclease III family. In terms of assembly, homodimer. Mg(2+) serves as cofactor.

The protein resides in the cytoplasm. It catalyses the reaction Endonucleolytic cleavage to 5'-phosphomonoester.. In terms of biological role, digests double-stranded RNA. Involved in the processing of primary rRNA transcript to yield the immediate precursors to the large and small rRNAs (23S and 16S). Processes some mRNAs, and tRNAs when they are encoded in the rRNA operon. Processes pre-crRNA and tracrRNA of type II CRISPR loci if present in the organism. The protein is Ribonuclease 3 of Dinoroseobacter shibae (strain DSM 16493 / NCIMB 14021 / DFL 12).